The primary structure comprises 344 residues: Ubiquitin-associated domain-containing protein 2 (344 aa).

Positions methionine 1–proline 35 are cleaved as a signal peptide. Topologically, residues histidine 36–lysine 91 are extracellular. The chain crosses the membrane as a helical span at residues phenylalanine 92–glutamate 112. Residues alanine 113–asparagine 125 lie on the Cytoplasmic side of the membrane. A helical transmembrane segment spans residues leucine 126–proline 146. The Extracellular segment spans residues arginine 147–threonine 163. An N-linked (GlcNAc...) asparagine glycan is attached at asparagine 161. Residues leucine 164–isoleucine 184 traverse the membrane as a helical segment. Residues serine 185–histidine 344 are Cytoplasmic-facing. The UBA domain maps to glutamate 304–histidine 344.

Interacts with FAF2. Interacts with LMBR1L. Interacts with AMFR and VCP.

Its subcellular location is the endoplasmic reticulum membrane. Its function is as follows. Restricts trafficking of FAF2 from the endoplasmic reticulum to lipid droplets. In association with LMBR1L and E3 ubiquitin-protein ligase AMFR, negatively regulates the canonical Wnt signaling pathway in the lymphocytes by promoting the ubiquitin-mediated degradation of CTNNB1 and Wnt receptors FZD6 and LRP6. The chain is Ubiquitin-associated domain-containing protein 2 (UBAC2) from Homo sapiens (Human).